The primary structure comprises 492 residues: Membrane-bound lytic murein transglycosylase F (492 aa).

A signal peptide spans Met1–Ala18. The segment at Ile19–Leu268 is non-LT domain. The interval Gln270–Gln492 is LT domain. Residue Glu313 is part of the active site.

This sequence in the N-terminal section; belongs to the bacterial solute-binding protein 3 family. In the C-terminal section; belongs to the transglycosylase Slt family.

The protein resides in the cell outer membrane. The catalysed reaction is Exolytic cleavage of the (1-&gt;4)-beta-glycosidic linkage between N-acetylmuramic acid (MurNAc) and N-acetylglucosamine (GlcNAc) residues in peptidoglycan, from either the reducing or the non-reducing ends of the peptidoglycan chains, with concomitant formation of a 1,6-anhydrobond in the MurNAc residue.. Its function is as follows. Murein-degrading enzyme that degrades murein glycan strands and insoluble, high-molecular weight murein sacculi, with the concomitant formation of a 1,6-anhydromuramoyl product. Lytic transglycosylases (LTs) play an integral role in the metabolism of the peptidoglycan (PG) sacculus. Their lytic action creates space within the PG sacculus to allow for its expansion as well as for the insertion of various structures such as secretion systems and flagella. The protein is Membrane-bound lytic murein transglycosylase F of Pasteurella multocida (strain Pm70).